A 126-amino-acid polypeptide reads, in one-letter code: Large ribosomal subunit protein bL12 (126 aa).

This sequence belongs to the bacterial ribosomal protein bL12 family. As to quaternary structure, homodimer. Part of the ribosomal stalk of the 50S ribosomal subunit. Forms a multimeric L10(L12)X complex, where L10 forms an elongated spine to which 2 to 4 L12 dimers bind in a sequential fashion. Binds GTP-bound translation factors.

Functionally, forms part of the ribosomal stalk which helps the ribosome interact with GTP-bound translation factors. Is thus essential for accurate translation. The polypeptide is Large ribosomal subunit protein bL12 (Acidobacterium capsulatum (strain ATCC 51196 / DSM 11244 / BCRC 80197 / JCM 7670 / NBRC 15755 / NCIMB 13165 / 161)).